The primary structure comprises 206 residues: Ribosomal RNA small subunit methyltransferase G (206 aa).

S-adenosyl-L-methionine is bound by residues Gly74, Leu79, 125–126, and Arg140; that span reads VE.

The protein belongs to the methyltransferase superfamily. RNA methyltransferase RsmG family.

It localises to the cytoplasm. The enzyme catalyses guanosine(527) in 16S rRNA + S-adenosyl-L-methionine = N(7)-methylguanosine(527) in 16S rRNA + S-adenosyl-L-homocysteine. Specifically methylates the N7 position of guanine in position 527 of 16S rRNA. This Shewanella baltica (strain OS223) protein is Ribosomal RNA small subunit methyltransferase G.